Consider the following 338-residue polypeptide: 26S proteasome regulatory subunit RPN8 (338 aa).

Serine 2 carries the post-translational modification N-acetylserine. The MPN domain occupies 8 to 143 (VTIAPLVLLS…TDAYVAIEQV (136 aa)). Positions 301–326 (IQEQRVKDKQSKVSDDSESESGDKEA) are enriched in basic and acidic residues. The segment at 301-338 (IQEQRVKDKQSKVSDDSESESGDKEATAPLIQRKNKKN) is disordered. Phosphoserine occurs at positions 314, 317, and 319. Phosphothreonine is present on threonine 327.

Belongs to the peptidase M67A family. N-acetylated by NAT1.

Acts as a regulatory subunit of the 26S proteasome which is involved in the ATP-dependent degradation of ubiquitinated proteins. In Saccharomyces cerevisiae (strain ATCC 204508 / S288c) (Baker's yeast), this protein is 26S proteasome regulatory subunit RPN8 (RPN8).